The primary structure comprises 272 residues: Phosphatidylglycerol--prolipoprotein diacylglyceryl transferase (272 aa).

The next 7 helical transmembrane spans lie at 17–37, 59–79, 95–115, 129–149, 176–196, 202–222, and 237–257; these read LAIR…LGFG, MLFF…VLFY, WEGG…MWLF, FIAP…FING, SQLY…WLFA, MGAV…AAEF, and LSMG…MVVW. Position 142 (R142) interacts with a 1,2-diacyl-sn-glycero-3-phospho-(1'-sn-glycerol).

Belongs to the Lgt family.

It localises to the cell inner membrane. It catalyses the reaction L-cysteinyl-[prolipoprotein] + a 1,2-diacyl-sn-glycero-3-phospho-(1'-sn-glycerol) = an S-1,2-diacyl-sn-glyceryl-L-cysteinyl-[prolipoprotein] + sn-glycerol 1-phosphate + H(+). It participates in protein modification; lipoprotein biosynthesis (diacylglyceryl transfer). Catalyzes the transfer of the diacylglyceryl group from phosphatidylglycerol to the sulfhydryl group of the N-terminal cysteine of a prolipoprotein, the first step in the formation of mature lipoproteins. In Cupriavidus necator (strain ATCC 17699 / DSM 428 / KCTC 22496 / NCIMB 10442 / H16 / Stanier 337) (Ralstonia eutropha), this protein is Phosphatidylglycerol--prolipoprotein diacylglyceryl transferase.